The sequence spans 1378 residues: Disease resistance protein RRS1 (1378 aa).

The TIR domain occupies 5 to 146 (EKDEEFVCIS…EIVRDVYETH (142 aa)). An NB-ARC domain is found at 170–421 (IGIRCVGIWG…LLEGCGFFPH (252 aa)). Residue 179–186 (GMPGIGKT) participates in ATP binding. LRR repeat units follow at residues 498-522 (SEEI…AFKN), 535-553 (NPEV…HSLP), 554-575 (NELR…NFDP), 577-598 (HLVE…TKNL), 621-646 (AENL…RLLR), 665-688 (PPNI…TVKP), 742-766 (LPNM…SIQG), 768-793 (PRFL…SLEI), and 831-854 (PRNL…PLSL). The Nuclear localization signal motif lies at 988–1005 (RNFHCWAPGKVVPKVRKD). A DNA-binding region (WRKY) is located at residues 1204–1272 (IPAIDEGDLW…YLSEHNHPRP (69 aa)). The interval 1300-1321 (RVFQNKDEPNQPHLPSSSTPPR) is disordered.

As to quaternary structure, interacts with PopP2, a R.solanacearum type III effector.

The protein localises to the nucleus. Its subcellular location is the cytoplasm. Transcription factor. Interacts specifically with the W box (5'-(T)TGAC[CT]-3'), a frequently occurring elicitor-responsive cis-acting element. Also acts as a disease resistance protein involved in resistance to fungal and bacterial pathogens, including R.solanacearum, P.syringae pv. tomato and C.higginsianum. RRS1 mediated resistance depends on salicylic acid and NDR1 (AC O48915). This chain is Disease resistance protein RRS1, found in Arabidopsis thaliana (Mouse-ear cress).